The chain runs to 322 residues: Undecaprenyl-phosphate 4-deoxy-4-formamido-L-arabinose transferase (322 aa).

Residues Met1–Met235 lie on the Cytoplasmic side of the membrane. Residues Leu236 to Ile256 form a helical membrane-spanning segment. At Leu257 to Gly269 the chain is on the periplasmic side. The chain crosses the membrane as a helical span at residues Val270–Leu290. Residues Leu291–Glu322 lie on the Cytoplasmic side of the membrane.

It belongs to the glycosyltransferase 2 family.

It localises to the cell inner membrane. It catalyses the reaction UDP-4-deoxy-4-formamido-beta-L-arabinose + di-trans,octa-cis-undecaprenyl phosphate = 4-deoxy-4-formamido-alpha-L-arabinopyranosyl di-trans,octa-cis-undecaprenyl phosphate + UDP. It functions in the pathway glycolipid biosynthesis; 4-amino-4-deoxy-alpha-L-arabinose undecaprenyl phosphate biosynthesis; 4-amino-4-deoxy-alpha-L-arabinose undecaprenyl phosphate from UDP-4-deoxy-4-formamido-beta-L-arabinose and undecaprenyl phosphate: step 1/2. The protein operates within bacterial outer membrane biogenesis; lipopolysaccharide biosynthesis. Catalyzes the transfer of 4-deoxy-4-formamido-L-arabinose from UDP to undecaprenyl phosphate. The modified arabinose is attached to lipid A and is required for resistance to polymyxin and cationic antimicrobial peptides. The protein is Undecaprenyl-phosphate 4-deoxy-4-formamido-L-arabinose transferase of Escherichia coli O17:K52:H18 (strain UMN026 / ExPEC).